The sequence spans 469 residues: Adenosylhomocysteinase (469 aa).

The substrate site is built by Thr-60, Asp-135, and Glu-195. 196 to 198 provides a ligand contact to NAD(+); the sequence is TTT. Substrate is bound by residues Lys-225 and Asp-229. NAD(+)-binding positions include Asn-230, 259-264, Glu-282, Asn-317, 338-340, and Asn-383; these read GYGDVG and IGH.

This sequence belongs to the adenosylhomocysteinase family. NAD(+) is required as a cofactor.

It is found in the cytoplasm. The catalysed reaction is S-adenosyl-L-homocysteine + H2O = L-homocysteine + adenosine. The protein operates within amino-acid biosynthesis; L-homocysteine biosynthesis; L-homocysteine from S-adenosyl-L-homocysteine: step 1/1. In terms of biological role, may play a key role in the regulation of the intracellular concentration of adenosylhomocysteine. The polypeptide is Adenosylhomocysteinase (Maricaulis maris (strain MCS10) (Caulobacter maris)).